Consider the following 60-residue polypeptide: Large ribosomal subunit protein bL32 (60 aa).

The interval 1–60 is disordered; it reads MAVQQNKKSPSKRGMHRSHDALTNPPLAIEPTTGETHLRHHISPNGFYRGKKVIKTKNDD. Over residues 49-60 the composition is skewed to basic residues; it reads RGKKVIKTKNDD.

This sequence belongs to the bacterial ribosomal protein bL32 family.

In Nitrosomonas eutropha (strain DSM 101675 / C91 / Nm57), this protein is Large ribosomal subunit protein bL32.